The sequence spans 105 residues: Nucleoid-associated protein SSP2277 (105 aa).

Residues 1–41 (MRGGGNMQQMMKQMQKMQKKMGEEQEKLKEEKVQGTAGGGM) form a disordered region. A compositionally biased stretch (low complexity) spans 7–16 (MQQMMKQMQK). A compositionally biased stretch (basic and acidic residues) spans 20 to 33 (KMGEEQEKLKEEKV).

Belongs to the YbaB/EbfC family. In terms of assembly, homodimer.

Its subcellular location is the cytoplasm. It is found in the nucleoid. Its function is as follows. Binds to DNA and alters its conformation. May be involved in regulation of gene expression, nucleoid organization and DNA protection. This Staphylococcus saprophyticus subsp. saprophyticus (strain ATCC 15305 / DSM 20229 / NCIMB 8711 / NCTC 7292 / S-41) protein is Nucleoid-associated protein SSP2277.